A 473-amino-acid chain; its full sequence is Photosystem II CP43 reaction center protein (473 aa).

Residues 1–14 constitute a propeptide that is removed on maturation; the sequence is MKTLYSLRRFYHVE. Thr-15 is modified (N-acetylthreonine). Thr-15 carries the post-translational modification Phosphothreonine. 5 consecutive transmembrane segments (helical) span residues 69 to 93, 134 to 155, 178 to 200, 255 to 275, and 291 to 312; these read LFEVAHFVPEKPMYEQGLILLPHLA, LLGPETLEESFPFFGYVWKDRN, KAFYFGGIYDTWAPGGGDVRKIT, KPFAWARRALVWSGEAYLSYS, and WFNNTAYPSEFYGPTGPEASQA. Glu-367 provides a ligand contact to [CaMn4O5] cluster. The chain crosses the membrane as a helical span at residues 447-471; it reads RARAAAAGFEKGIDRDFEPVLSMTP.

It belongs to the PsbB/PsbC family. PsbC subfamily. As to quaternary structure, PSII is composed of 1 copy each of membrane proteins PsbA, PsbB, PsbC, PsbD, PsbE, PsbF, PsbH, PsbI, PsbJ, PsbK, PsbL, PsbM, PsbT, PsbX, PsbY, PsbZ, Psb30/Ycf12, at least 3 peripheral proteins of the oxygen-evolving complex and a large number of cofactors. It forms dimeric complexes. Binds multiple chlorophylls and provides some of the ligands for the Ca-4Mn-5O cluster of the oxygen-evolving complex. It may also provide a ligand for a Cl- that is required for oxygen evolution. PSII binds additional chlorophylls, carotenoids and specific lipids. serves as cofactor.

It is found in the plastid. The protein localises to the chloroplast thylakoid membrane. In terms of biological role, one of the components of the core complex of photosystem II (PSII). It binds chlorophyll and helps catalyze the primary light-induced photochemical processes of PSII. PSII is a light-driven water:plastoquinone oxidoreductase, using light energy to abstract electrons from H(2)O, generating O(2) and a proton gradient subsequently used for ATP formation. The polypeptide is Photosystem II CP43 reaction center protein (Pisum sativum (Garden pea)).